We begin with the raw amino-acid sequence, 1972 residues long: TP53-binding protein 1 (1972 aa).

Disordered stretches follow at residues 24-273, 290-332, and 346-507; these read DSQP…VAAM, QIQK…CSLA, and GQRS…LGLS. Residues Ser-25 and Ser-63 each carry the phosphoserine modification. The segment covering 82–91 has biased composition (basic and acidic residues); it reads EHLKENKVAD. Polar residues predominate over residues 94–121; it reads DSSNLDTCGSISQVIEQLPQPNRTSSVL. Residues Ser-105 and Ser-124 each carry the phosphoserine modification. A compositionally biased stretch (basic and acidic residues) spans 138 to 149; the sequence is ELEQKEKEKEED. Positions 151-168 are enriched in polar residues; that stretch reads SGNTTHSLGAEDTASSQL. Phosphoserine is present on residues Ser-166, Ser-176, and Ser-178. Residues 195–205 show a composition bias toward polar residues; the sequence is LQSVTTNSGYT. A Glycyl lysine isopeptide (Lys-Gly) (interchain with G-Cter in SUMO1); alternate cross-link involves residue Lys-217. Residue Lys-217 forms a Glycyl lysine isopeptide (Lys-Gly) (interchain with G-Cter in SUMO2); alternate linkage. A phosphoserine mark is found at Ser-222, Ser-265, and Ser-294. Polar residues-rich tracts occupy residues 300 to 322 and 346 to 361; these read LSTQEDLFDQSNKTVSSDGCSTP and GQRSLVQDSLSTNSSD. Position 302 is a phosphothreonine (Thr-302). A phosphoserine mark is found at Ser-366, Ser-380, Ser-395, Ser-398, Ser-429, Ser-452, and Ser-464. Positions 426 to 441 are enriched in polar residues; sequence STVSPQASTPISQSTP. The span at 442–452 shows a compositional bias: pro residues; the sequence is VFPPGSLPIPS. The segment covering 481-490 has biased composition (polar residues); that stretch reads HSSSLTVECS. Residues 491 to 501 show a composition bias toward basic and acidic residues; it reads KTSEIEPKNSP. 5 positions are modified to phosphoserine: Ser-500, Ser-507, Ser-518, Ser-523, and Ser-525. The segment covering 520 to 531 has biased composition (polar residues); sequence SEYSQSPKMESL. A disordered region spans residues 520 to 556; that stretch reads SEYSQSPKMESLSSHRIDEDGENTQIEDTEPMSPVLN. A compositionally biased stretch (acidic residues) spans 538–549; sequence EDGENTQIEDTE. Phosphothreonine is present on residues Thr-543 and Thr-548. Ser-552, Ser-566, and Ser-580 each carry phosphoserine. The disordered stretch occupies residues 568–595; the sequence is LMNPAQDGEVQLSQNDDKTKGDDTDTRD. The span at 582–595 shows a compositional bias: basic and acidic residues; the sequence is NDDKTKGDDTDTRD. 4 positions are modified to phosphoserine: Ser-630, Ser-635, Ser-639, and Ser-640. A disordered region spans residues 649–687; that stretch reads EIKEHHPEEGSSGSEVEEIPETPCESQGEELKEENMESV. Thr-670 carries the phosphothreonine modification. Phosphoserine is present on residues Ser-692, Ser-724, Ser-727, Ser-771, Ser-809, Ser-830, Ser-831, and Ser-834. The disordered stretch occupies residues 742–911; it reads EQEAWEEATS…TPFHFTLPKE (170 aa). Residues 798-816 show a composition bias toward basic and acidic residues; the sequence is AENRLDTKEEKSVEYEGDL. Residues 839–848 show a composition bias toward basic and acidic residues; it reads RADDPLRLDQ. Positions 849–864 are enriched in polar residues; sequence ELQQPQTQEKTSNSLT. Residue Thr-855 is modified to Phosphothreonine. A Glycyl lysine isopeptide (Lys-Gly) (interchain with G-Cter in SUMO1); alternate cross-link involves residue Lys-868. Residue Lys-868 forms a Glycyl lysine isopeptide (Lys-Gly) (interchain with G-Cter in SUMO2); alternate linkage. Positions 890-902 are enriched in polar residues; that stretch reads HASQSFCESSSET. At Thr-922 the chain carries Phosphothreonine. Residue Lys-930 forms a Glycyl lysine isopeptide (Lys-Gly) (interchain with G-Cter in SUMO2) linkage. A phosphoserine mark is found at Ser-970 and Ser-975. Residue Lys-984 forms a Glycyl lysine isopeptide (Lys-Gly) (interchain with G-Cter in SUMO2) linkage. 2 disordered regions span residues 997–1028 and 1045–1103; these read EASEESLQFNLEKPATGERKNGSTAVAESVAS and ENEA…VSPA. Positions 1018 to 1028 are enriched in polar residues; sequence GSTAVAESVAS. A Phosphoserine modification is found at Ser-1028. Residue Thr-1056 is modified to Phosphothreonine. At Ser-1068 the chain carries Phosphoserine. Residues 1071–1083 show a composition bias toward basic and acidic residues; sequence EEEKEKLEGDHTI. Ser-1086, Ser-1094, Ser-1101, and Ser-1114 each carry phosphoserine. Over residues 1127 to 1139 the composition is skewed to basic and acidic residues; it reads DQKEGRSTNKENP. Disordered stretches follow at residues 1127-1148, 1188-1232, and 1269-1478; these read DQKEGRSTNKENPSKALIERPS, NFGK…QPPH, and VTEE…DGLD. Ser-1148 carries the post-translational modification Phosphoserine. The span at 1188–1200 shows a compositional bias: polar residues; it reads NFGKQDATVQTER. Thr-1214 carries the phosphothreonine modification. Ser-1216 and Ser-1219 each carry phosphoserine. Acidic residues predominate over residues 1272-1285; that stretch reads ETEEPIVECQECET. Low complexity-rich tracts occupy residues 1298 to 1307 and 1316 to 1329; these read DLGDISSFSS and SSGTSLSAMHSSGS. Phosphoserine occurs at positions 1317 and 1342. Arg-1355 bears the Omega-N-methylarginine mark. At Ser-1362 the chain carries Phosphoserine. Lys-1365 participates in a covalent cross-link: Glycyl lysine isopeptide (Lys-Gly) (interchain with G-Cter in SUMO2). A Phosphoserine modification is found at Ser-1368. A Phosphothreonine modification is found at Thr-1372. Positions 1396–1403 match the GAR motif; that stretch reads RGRGRRGR. A phosphoserine mark is found at Ser-1426 and Ser-1430. A Glycyl lysine isopeptide (Lys-Gly) (interchain with G-Cter in SUMO1); alternate cross-link involves residue Lys-1434. Residue Lys-1434 forms a Glycyl lysine isopeptide (Lys-Gly) (interchain with G-Cter in SUMO2); alternate linkage. 3 positions are modified to phosphoserine: Ser-1460, Ser-1462, and Ser-1474. The tudor-like stretch occupies residues 1484-1603; the sequence is NSFVGLRVVA…NRLREQYGLG (120 aa). The interval 1495–1523 is interaction with dimethylated histone H4; sequence WSSNGYFYSGKITRDVGAGKYKLLFDDGY. Lys-1563 participates in a covalent cross-link: Glycyl lysine isopeptide (Lys-Gly) (interchain with G-Cter in SUMO1); alternate. Lys-1563 participates in a covalent cross-link: Glycyl lysine isopeptide (Lys-Gly) (interchain with G-Cter in SUMO2); alternate. A UDR motif is present at residues 1604–1631; that stretch reads PYEAVTPLTKAADISLDNLVEGKRKRRS. Thr-1609 is modified (phosphothreonine). A phosphoserine mark is found at Ser-1618, Ser-1631, and Ser-1635. Disordered stretches follow at residues 1622 to 1719 and 1745 to 1768; these read LVEG…EEQR and LASRSKLPDGPTGSSEEEEEFLEI. Residues 1634 to 1650 show a composition bias toward low complexity; the sequence is SSPATPTASSSSSTTPT. Residues Thr-1638 and Thr-1648 each carry the phosphothreonine modification. A phosphoserine mark is found at Ser-1656, Ser-1673, and Ser-1678. Lys-1685 participates in a covalent cross-link: Glycyl lysine isopeptide (Lys-Gly) (interchain with G-Cter in ubiquitin). Residues Ser-1701, Ser-1759, and Ser-1778 each carry the phosphoserine modification. 2 consecutive BRCT domains span residues 1724–1848 and 1864–1964; these read LNKT…NYLL and PREN…QHPK.

As to quaternary structure, homoligomer. Interacts with p53/TP53 (via the central domain). Interacts with DCLRE1C. Interacts with histone H2AX and this requires phosphorylation of H2AX on 'Ser-139'. Interacts with histone H4 that has been dimethylated at 'Lys-20' (H4K20me2). Has low affinity for histone H4 containing monomethylated 'Lys-20' (H4K20me1). Does not bind histone H4 containing unmethylated or trimethylated 'Lys-20' (H4K20me3). Has low affinity for histone H3 that has been dimethylated on 'Lys-79'. Has very low affinity for histone H3 that has been monomethylated on 'Lys-79' (in vitro). Does not bind unmethylated histone H3. Interacts with histone H2A monoubiquitinated at 'Lys-15' (H2AK15Ub). Interacts with PWWP3A/EXPAND1. Interacts with CHEK2; modulates CHEK2 phosphorylation at 'Thr-68' in response to infrared. Interacts with MSL1; this interaction may be required for MSL1 DNA repair activity, but not for histone acetyltransferase activity. Interacts (when phosphorylated by ATM) with RIF1. Interacts (via the Tudor-like domain) with NUDT16L1/TIRR; interaction masks the Tudor-like domain and prevents recruitment to chromatin. Interacts with PAXIP1. Interacts with SHLD2. Interacts (when phosphorylated) with TOPBP1. Interacts with GFI1; promoting methylation by PRMT1. Interacts with (phosphorylated) DYNLL1; specifically binds DYNLL1 phosphorylated at 'Ser-88' and promotes its recruitment to double stand breaks (DSBs). In terms of assembly, (Microbial infection) Interacts (via C-terminus) with Epstein-Barr virus lytic switch protein BZLF1 (via C-terminus); this interaction is involved in the activation of the viral lytic cycle. In terms of processing, asymmetrically dimethylated on Arg residues by PRMT1. Methylation is required for DNA binding. Phosphorylated at basal level in the absence of DNA damage. Phosphorylated by ATM in response to DNA damage: phosphorylation at different sites promotes interaction with different set of proteins: phosphorylation at the N-terminus by ATM (residues from 6-178) promotes interaction with PAXIP1 and non-homologous end joining (NHEJ) of dysfunctional telomeres. Phosphorylation by ATM at residues that are located more C-terminus (residues 300-650) leads to promote interaction with RIF1. Interaction with RIF1 leads to disrupt interaction with NUDT16L1/TIRR. Phosphorylation at Thr-1609 and Ser-1618 in the UDR motif blocks interaction with H2AK15ub. Dephosphorylated by PPP4C. Hyperphosphorylation during mitosis correlates with its exclusion from chromatin and DNA lesions. Hyperphosphorylated in an ATR-dependent manner in response to DNA damage induced by UV irradiation. Dephosphorylated by PPP5C. Phosphorylation at Ser-366 and Thr-670 promotes interaction with TOPBP1. Phosphorylated by VRK1. Post-translationally, monoubiquitinated at Lys-1685 by MSL2 is reponse to DNA damage, leading to its stabilization.

It is found in the nucleus. The protein resides in the chromosome. The protein localises to the centromere. Its subcellular location is the kinetochore. Double-strand break (DSB) repair protein involved in response to DNA damage, telomere dynamics and class-switch recombination (CSR) during antibody genesis. Plays a key role in the repair of double-strand DNA breaks (DSBs) in response to DNA damage by promoting non-homologous end joining (NHEJ)-mediated repair of DSBs and specifically counteracting the function of the homologous recombination (HR) repair protein BRCA1. In response to DSBs, phosphorylation by ATM promotes interaction with RIF1 and dissociation from NUDT16L1/TIRR, leading to recruitment to DSBs sites. Recruited to DSBs sites by recognizing and binding histone H2A monoubiquitinated at 'Lys-15' (H2AK15Ub) and histone H4 dimethylated at 'Lys-20' (H4K20me2), two histone marks that are present at DSBs sites. Required for immunoglobulin class-switch recombination (CSR) during antibody genesis, a process that involves the generation of DNA DSBs. Participates in the repair and the orientation of the broken DNA ends during CSR. In contrast, it is not required for classic NHEJ and V(D)J recombination. Promotes NHEJ of dysfunctional telomeres via interaction with PAXIP1. The chain is TP53-binding protein 1 from Homo sapiens (Human).